Consider the following 237-residue polypeptide: Phosphoribosylaminoimidazole-succinocarboxamide synthase (237 aa).

It belongs to the SAICAR synthetase family.

The catalysed reaction is 5-amino-1-(5-phospho-D-ribosyl)imidazole-4-carboxylate + L-aspartate + ATP = (2S)-2-[5-amino-1-(5-phospho-beta-D-ribosyl)imidazole-4-carboxamido]succinate + ADP + phosphate + 2 H(+). The protein operates within purine metabolism; IMP biosynthesis via de novo pathway; 5-amino-1-(5-phospho-D-ribosyl)imidazole-4-carboxamide from 5-amino-1-(5-phospho-D-ribosyl)imidazole-4-carboxylate: step 1/2. This is Phosphoribosylaminoimidazole-succinocarboxamide synthase from Listeria welshimeri serovar 6b (strain ATCC 35897 / DSM 20650 / CCUG 15529 / CIP 8149 / NCTC 11857 / SLCC 5334 / V8).